Reading from the N-terminus, the 99-residue chain is MVKVKIEFSGGLELLFGNQKQHDVDVPVQEGKQLTAGHLIAWTRDNMLRERPELFVKGHTVRPGILVLINECDWELSGATESTISDGDVVVFISTLHGG.

G99 is modified (1-thioglycine). A Glycyl lysine isopeptide (Gly-Lys) (interchain with K-? in acceptor proteins) cross-link involves residue G99.

It belongs to the URM1 family. Post-translationally, C-terminal thiocarboxylation occurs in 2 steps, it is first acyl-adenylated (-COAMP) via the hesA/moeB/thiF part of the MOCS3 homolog, then thiocarboxylated (-COSH) via the rhodanese domain of the MOCS3 homolog.

Its subcellular location is the cytoplasm. Its pathway is tRNA modification; 5-methoxycarbonylmethyl-2-thiouridine-tRNA biosynthesis. Functionally, acts as a sulfur carrier required for 2-thiolation of mcm(5)S(2)U at tRNA wobble positions of cytosolic tRNA(Lys), tRNA(Glu) and tRNA(Gln). Serves as sulfur donor in tRNA 2-thiolation reaction by being thiocarboxylated (-COSH) at its C-terminus by MOCS3. The sulfur is then transferred to tRNA to form 2-thiolation of mcm(5)S(2)U. Also acts as a ubiquitin-like protein (UBL) that is covalently conjugated via an isopeptide bond to lysine residues of target proteins. The thiocarboxylated form serves as substrate for conjugation and oxidative stress specifically induces the formation of UBL-protein conjugates. This is Ubiquitin-related modifier 1 homolog from Chlamydomonas reinhardtii (Chlamydomonas smithii).